The primary structure comprises 448 residues: Inositol hexakisphosphate kinase 2 (448 aa).

ATP contacts are provided by residues 229-231 and aspartate 242; that span reads ENL. Substrate contacts are provided by residues 238 to 246, lysine 244, and 258 to 265; these read PCVLDLKMG and KAANQIRK. Aspartate 405 lines the ATP pocket. Histidine 408 serves as a coordination point for substrate.

It belongs to the inositol phosphokinase (IPK) family. As to expression, highly expressed in brain and lung, and at slightly lower levels in liver, kidney and testis.

It localises to the nucleus. The catalysed reaction is 1D-myo-inositol hexakisphosphate + ATP = 5-diphospho-1D-myo-inositol 1,2,3,4,6-pentakisphosphate + ADP. It functions in the pathway phospholipid metabolism; phosphatidylinositol metabolism. Converts inositol hexakisphosphate (InsP6) to diphosphoinositol pentakisphosphate (InsP7/PP-InsP5). May play a role in the regulation of Na(+)-dependent phosphate cotransport, possibly via its role in diphosphoinositol pentakisphosphate (InsP7/PP-InsP5) biosynthesis. This is Inositol hexakisphosphate kinase 2 (Ip6k2) from Mus musculus (Mouse).